A 675-amino-acid polypeptide reads, in one-letter code: DNA ligase (675 aa).

NAD(+)-binding positions include 43–47, 92–93, and glutamate 122; these read DYEYD and SM. Lysine 124 serves as the catalytic N6-AMP-lysine intermediate. The NAD(+) site is built by arginine 145, glutamate 179, lysine 295, and lysine 319. The Zn(2+) site is built by cysteine 413, cysteine 416, cysteine 431, and cysteine 436. Residues 597–675 enclose the BRCT domain; that stretch reads SPDGYYKGKK…ETEAIAKFEQ (79 aa).

This sequence belongs to the NAD-dependent DNA ligase family. LigA subfamily. It depends on Mg(2+) as a cofactor. Mn(2+) serves as cofactor.

It catalyses the reaction NAD(+) + (deoxyribonucleotide)n-3'-hydroxyl + 5'-phospho-(deoxyribonucleotide)m = (deoxyribonucleotide)n+m + AMP + beta-nicotinamide D-nucleotide.. DNA ligase that catalyzes the formation of phosphodiester linkages between 5'-phosphoryl and 3'-hydroxyl groups in double-stranded DNA using NAD as a coenzyme and as the energy source for the reaction. It is essential for DNA replication and repair of damaged DNA. The protein is DNA ligase of Pediococcus pentosaceus (strain ATCC 25745 / CCUG 21536 / LMG 10740 / 183-1w).